Reading from the N-terminus, the 101-residue chain is Small ubiquitin-related modifier 1 (101 aa).

Serine 2 is subject to N-acetylserine. Position 2 is a phosphoserine (serine 2). A Glycyl lysine isopeptide (Lys-Gly) (interchain with G-Cter in SUMO1); alternate cross-link involves residue lysine 7. A Glycyl lysine isopeptide (Lys-Gly) (interchain with G-Cter in SUMO2); alternate cross-link involves residue lysine 7. Serine 9 carries the phosphoserine modification. Residues lysine 16, lysine 17, and lysine 23 each participate in a glycyl lysine isopeptide (Lys-Gly) (interchain with G-Cter in SUMO2) cross-link. The 78-residue stretch at 20–97 (EYIKLKVIGQ…IEVYHEQTGG (78 aa)) folds into the Ubiquitin-like domain. Lysine 25 participates in a covalent cross-link: Glycyl lysine isopeptide (Lys-Gly) (interchain with G-Cter in SUMO1). At serine 32 the chain carries Phosphoserine. Glycyl lysine isopeptide (Lys-Gly) (interchain with G-Cter in SUMO2) cross-links involve residues lysine 37, lysine 39, lysine 45, and lysine 46. A Glycyl lysine isopeptide (Gly-Lys) (interchain with K-? in acceptor proteins) cross-link involves residue glycine 97. The propeptide occupies 98–101 (HSTV).

This sequence belongs to the ubiquitin family. SUMO subfamily. As to quaternary structure, covalently attached to KCNB1; UBE2I increases cross-linking with KCNB1 and PIAS1 decreases cross-links with KCNB1. Interacts with SAE2, RANBP2, PIAS1 and PIAS2. Interacts with PRKN. Covalently attached to a number of proteins such as IKFZ1, PML, RANGAP1, HIPK2, SP100, p53, p73-alpha, MDM2, JUN, DNMT3B and TDG. Also interacts with HIF1A, HIPK2, HIPK3, CHD3, EXOSC9, RAD51 and RAD52. Interacts with USP25 (via ts SIM domain); the interaction weakly sumoylates USP25. Interacts with SIMC1, CASP8AP2, RNF111 and SOBP (via SIM domains). Interacts with BHLHE40/DEC1. Interacts with RWDD3. Interacts with UBE2I/UBC9 and this interaction is enhanced in the presence of RWDD3. Interacts with MTA1. Interacts with SENP2. Interacts with HINT1. Post-translationally, cleavage of precursor form by SENP1, SENP2 is necessary for function. Polymeric SUMO1 chains undergo polyubiquitination by RNF4.

The protein localises to the nucleus membrane. It is found in the nucleus speckle. The protein resides in the cytoplasm. Its subcellular location is the nucleus. It localises to the PML body. The protein localises to the cell membrane. Functionally, ubiquitin-like protein that can be covalently attached to proteins as a monomer or a lysine-linked polymer. Covalent attachment via an isopeptide bond to its substrates requires prior activation by the E1 complex SAE1-SAE2 and linkage to the E2 enzyme UBE2I, and can be promoted by E3 ligases such as PIAS1-4, RANBP2 or CBX4. This post-translational modification on lysine residues of proteins plays a crucial role in a number of cellular processes such as nuclear transport, DNA replication and repair, mitosis and signal transduction. Involved for instance in targeting RANGAP1 to the nuclear pore complex protein RANBP2. Covalently attached to the voltage-gated potassium channel KCNB1; this modulates the gating characteristics of KCNB1. Polymeric SUMO1 chains are also susceptible to polyubiquitination which functions as a signal for proteasomal degradation of modified proteins. May also regulate a network of genes involved in palate development. Covalently attached to ZFHX3. This chain is Small ubiquitin-related modifier 1 (SUMO1), found in Cervus nippon (Sika deer).